Reading from the N-terminus, the 686-residue chain is DNA topoisomerase 1 (686 aa).

Residues 1-141 form the Toprim domain; sequence MILIIAEKPN…KRMKFSALTK (141 aa). Residues Glu7 and Asp107 each contribute to the Mg(2+) site. The Topo IA-type catalytic domain maps to 156 to 574; that stretch reads NFGMANAGIA…EAKERLTKIL (419 aa). An interaction with DNA region spans residues 196–201; that stretch reads STGRVQ. Residue Tyr317 is the O-(5'-phospho-DNA)-tyrosine intermediate of the active site. Residues 606–634 form a C4-type 1 zinc finger; sequence CPKCGGDLIVKYNKKTGKRFVGCSNWPKC. A C4-type 2; atypical zinc finger spans residues 653-678; it reads CCNGAPVVIIREEDGREFEICLDINC.

Belongs to the type IA topoisomerase family. As to quaternary structure, monomer. Mg(2+) is required as a cofactor.

The catalysed reaction is ATP-independent breakage of single-stranded DNA, followed by passage and rejoining.. Its function is as follows. Releases the supercoiling and torsional tension of DNA, which is introduced during the DNA replication and transcription, by transiently cleaving and rejoining one strand of the DNA duplex. Introduces a single-strand break via transesterification at a target site in duplex DNA. The scissile phosphodiester is attacked by the catalytic tyrosine of the enzyme, resulting in the formation of a DNA-(5'-phosphotyrosyl)-enzyme intermediate and the expulsion of a 3'-OH DNA strand. The free DNA strand then undergoes passage around the unbroken strand, thus removing DNA supercoils. Finally, in the religation step, the DNA 3'-OH attacks the covalent intermediate to expel the active-site tyrosine and restore the DNA phosphodiester backbone. This chain is DNA topoisomerase 1, found in Pyrococcus horikoshii (strain ATCC 700860 / DSM 12428 / JCM 9974 / NBRC 100139 / OT-3).